We begin with the raw amino-acid sequence, 91 residues long: Acylphosphatase (91 aa).

The Acylphosphatase-like domain occupies 4–91 (RAMVTVKGMV…GEFDDFHIAY (88 aa)). Residues Arg-19 and Asn-37 contribute to the active site.

It belongs to the acylphosphatase family.

It carries out the reaction an acyl phosphate + H2O = a carboxylate + phosphate + H(+). The polypeptide is Acylphosphatase (acyP) (Geotalea uraniireducens (strain Rf4) (Geobacter uraniireducens)).